The chain runs to 79 residues: Small serum protein 3 (79 aa).

An N-terminal signal peptide occupies residues 1-19 (MKVFFILIIFSFTLATCQG). Disulfide bonds link C21-C72, C39-C64, and C62-C71.

It is found in the secreted. In terms of biological role, shows an slight inhibitory effect toward the metalloproteinase brevilysin H6, but does not inhibit the metalloproteinases thermolysin, HR1A and HR1B. The sequence is that of Small serum protein 3 from Protobothrops flavoviridis (Habu).